The chain runs to 227 residues: GTP:AMP phosphotransferase AK3, mitochondrial (227 aa).

Residues Gly-17, Gly-19, Lys-20, Gly-21, and Thr-22 each coordinate GTP. At Lys-20 the chain carries N6-succinyllysine. Residue Lys-34 is modified to N6-acetyllysine. The residue at position 37 (Ser-37) is a Phosphoserine. Positions 37–66 (SSGDLLRDNMLRGTEIGVLAKAFIDQGKLI) are NMP. 2 residues coordinate AMP: Ser-38 and Arg-43. Lys-57 is subject to N6-succinyllysine. Residue Lys-64 participates in AMP binding. Residues Lys-64 and Lys-80 each carry the N6-acetyllysine; alternate modification. 2 positions are modified to N6-succinyllysine; alternate: Lys-64 and Lys-80. AMP contacts are provided by Gly-91, Arg-94, and Gln-98. The LID stretch occupies residues 127–164 (ARWIHPASGRVYNIEFNPPKTVGIDDLTGEPLIQREDD). The GTP site is built by Arg-128, Tyr-138, Asn-139, Arg-161, and Arg-172. N6-acetyllysine; alternate occurs at positions 174 and 189. Lys-174 and Lys-189 each carry N6-succinyllysine; alternate. Position 201 (Thr-201) interacts with GTP. Residue Lys-203 is modified to N6-acetyllysine.

It belongs to the adenylate kinase family. AK3 subfamily. Monomer.

Its subcellular location is the mitochondrion matrix. It carries out the reaction a ribonucleoside 5'-triphosphate + AMP = a ribonucleoside 5'-diphosphate + ADP. It catalyses the reaction GTP + AMP = GDP + ADP. The catalysed reaction is ITP + AMP = IDP + ADP. Its function is as follows. Mitochondrial adenylate kinase with a specific GTP:AMP phosphotransferase activity. Could also use ITP as phosphate donor. Its physiological function is to recycle GTP into GDP which is necessary for the TCA cycle in the mitochondrial matrix. This chain is GTP:AMP phosphotransferase AK3, mitochondrial, found in Pongo abelii (Sumatran orangutan).